The sequence spans 353 residues: MAIPLVLVLAWLLPVVLAASLTQVNNFGDNPGSLQMYIYVPNKLASKPAIIVAMHPCGGSATEYYGMYDYHSPADQYGYILIYPSATRDYNCFDAYSSASLTHNGGSDSLSIVNMVKYVISTYGADSSKVYMTGSSSGAIMTNVLAGAYPDVFAAGSAFSGMPYACLYGAGAADPIMSNQTCSQGQIQHTGQQWAAYVHNGYPGYTGQYPRLQMWHGTADNVISYADLGQEISQWTTIMGLSFTGNQTNTPLSGYTKMVYGDGSKFQAYSAAGVGHFVPTDVSVVLDWFGITSGTTTTTTPTTTPTTSTSPSSTGGCTAAHWAQCGGIGYSGCTACASPYTCQKANDYYSQCL.

A signal peptide spans 1–18; it reads MAIPLVLVLAWLLPVVLA. Positions 19 to 291 are catalytic; the sequence is ASLTQVNNFG…VSVVLDWFGI (273 aa). The active-site Charge relay system is Ser-136. 2 N-linked (GlcNAc...) asparagine glycosylation sites follow: Asn-179 and Asn-246. The 37-residue stretch at 317 to 353 folds into the CBM1 domain; that stretch reads CTAAHWAQCGGIGYSGCTACASPYTCQKANDYYSQCL.

This sequence belongs to the carbohydrate esterase 1 (CE1) family. Feruloyl esterase type B subfamily. Glycosylated.

It localises to the secreted. The enzyme catalyses feruloyl-polysaccharide + H2O = ferulate + polysaccharide.. Inhibited by the specific serine esterase inhibitor AEBSF. Its function is as follows. Involved in degradation of plant cell walls. Hydrolyzes the feruloyl-arabinose ester bond in arabinoxylans, and the feruloyl-galactose and feruloyl-arabinose ester bonds in pectin. Binds strongly to cellulose. This chain is Feruloyl esterase B (FAEB), found in Talaromyces funiculosus (Fruitlet core rot fungus).